Reading from the N-terminus, the 122-residue chain is Vacuolar transporter chaperone complex subunit 1 (122 aa).

At 1 to 32 the chain is on the cytoplasmic side; that stretch reads MSTQPLLQTTPGKRIALPVRVEPKVFFANERT. The helical transmembrane segment at 33–53 threads the bilayer; the sequence is FLSWLSFAVVLGGLSVGLLNF. Over 54-59 the chain is Vacuolar; that stretch reads GDRIGK. Residues 60 to 80 traverse the membrane as a helical segment; sequence ISAGLFTIVAIGTMGYALGIY. The Cytoplasmic segment spans residues 81-101; sequence HWRASAIRRRGSGPYDDRLGP. The helical transmembrane segment at 102 to 122 threads the bilayer; the sequence is TILCFVLLAAIITNFVLRMLF.

The protein belongs to the VTC1 family. The VTC core complex is an integral membrane heterooligomer composed of at least the catalytic subunit vtc4 and the accessory subunits vtc1 and vtc2. vtc1 is a small membrane protein without hydrophilic domain. Vtc2 and vtc4 are related and have 2 hydrophilic domains that face the cytosol, an N-terminal SPX domain and the central core domain. The central core in vtc4 is the catalytic domain. Vtc1 interacts with GTP-bound Ras-like cdc42, which is subsequently inactivated.

The protein resides in the vacuole membrane. Its function is as follows. Accessory subunit of the vacuolar transporter chaperone (VTC) complex. The VTC complex acts as a vacuolar polyphosphate polymerase that catalyzes the synthesis of inorganic polyphosphate (polyP) via transfer of phosphate from ATP to a growing polyP chain, releasing ADP. VTC exposes its catalytic domain vtc4 to the cytosol, where the growing polyP chain winds through a tunnel-shaped pocket, integrating cytoplasmic polymer synthesis with polyP membrane translocation. The VTC complex carries 9 vacuolar transmembrane domains, which are likely to constitute the translocation channel into the organelle lumen. PolyP synthesis is tightly coupled to its transport into the vacuole lumen, in order to avoid otherwise toxic intermediates in the cytosol, and it depends on the proton gradient across the membrane, formed by V-ATPase. Vtc1 contributes only 3 transmembrane domains to the complex. The VTC complex also plays a role in vacuolar membrane fusion. Involved in the control of cell polarity. This chain is Vacuolar transporter chaperone complex subunit 1, found in Schizosaccharomyces pombe (strain 972 / ATCC 24843) (Fission yeast).